We begin with the raw amino-acid sequence, 559 residues long: Urocanate hydratase (559 aa).

NAD(+) contacts are provided by residues 53 to 54 (GG), Q131, 177 to 179 (GMG), E197, R202, 243 to 244 (NA), 264 to 268 (QTSAH), 274 to 275 (YL), and Y323. C411 is an active-site residue. Position 493 (G493) interacts with NAD(+).

The protein belongs to the urocanase family. NAD(+) serves as cofactor.

It is found in the cytoplasm. The enzyme catalyses 4-imidazolone-5-propanoate = trans-urocanate + H2O. The protein operates within amino-acid degradation; L-histidine degradation into L-glutamate; N-formimidoyl-L-glutamate from L-histidine: step 2/3. Its function is as follows. Catalyzes the conversion of urocanate to 4-imidazolone-5-propionate. This is Urocanate hydratase from Pseudomonas paraeruginosa (strain DSM 24068 / PA7) (Pseudomonas aeruginosa (strain PA7)).